The primary structure comprises 427 residues: Probable glucuronosyltransferase Os03g0107900 (427 aa).

The Cytoplasmic segment spans residues 1–33 (MAMRGDPKQRRASASAPHGGAAHHVADKLRRHS). Residues 34 to 54 (TFLLLLLLLWFALSLYLFLSA) traverse the membrane as a helical; Signal-anchor for type II membrane protein segment. Residues 55–427 (TPPPPRPAFL…QRRHVESWKR (373 aa)) lie on the Lumenal side of the membrane. Residues Asn136, Asn168, Asn264, and Asn374 are each glycosylated (N-linked (GlcNAc...) asparagine).

The protein belongs to the glycosyltransferase 47 family.

The protein resides in the golgi apparatus membrane. Its function is as follows. Involved in the synthesis of glucuronoxylan hemicellulose in secondary cell walls. This chain is Probable glucuronosyltransferase Os03g0107900, found in Oryza sativa subsp. japonica (Rice).